We begin with the raw amino-acid sequence, 208 residues long: ATP-dependent Clp protease proteolytic subunit (208 aa).

The Nucleophile role is filled by S107. Residue H132 is part of the active site.

The protein belongs to the peptidase S14 family. As to quaternary structure, fourteen ClpP subunits assemble into 2 heptameric rings which stack back to back to give a disk-like structure with a central cavity, resembling the structure of eukaryotic proteasomes.

It is found in the cytoplasm. The enzyme catalyses Hydrolysis of proteins to small peptides in the presence of ATP and magnesium. alpha-casein is the usual test substrate. In the absence of ATP, only oligopeptides shorter than five residues are hydrolyzed (such as succinyl-Leu-Tyr-|-NHMec, and Leu-Tyr-Leu-|-Tyr-Trp, in which cleavage of the -Tyr-|-Leu- and -Tyr-|-Trp bonds also occurs).. Cleaves peptides in various proteins in a process that requires ATP hydrolysis. Has a chymotrypsin-like activity. Plays a major role in the degradation of misfolded proteins. This Methylorubrum extorquens (strain CM4 / NCIMB 13688) (Methylobacterium extorquens) protein is ATP-dependent Clp protease proteolytic subunit.